Here is a 653-residue protein sequence, read N- to C-terminus: Dual specificity protein kinase shkB (653 aa).

Residues 112–133 (NPNNNNNNSNNTNSSDSNQNYS) are disordered. The region spanning 174-432 (YNREAKLGSG…FAEISKQRIL (259 aa)) is the Protein kinase domain. ATP-binding positions include 180-188 (LGSGAFGSV) and Lys-201. The active-site Proton acceptor is the Asp-298. Residues 534–625 (GFMAATSSKN…IKEPFEGGPF (92 aa)) form the SH2 domain.

It belongs to the protein kinase superfamily. TKL Ser/Thr protein kinase family. SH2 domain-containing protein kinase subfamily.

The protein localises to the membrane. It carries out the reaction L-seryl-[protein] + ATP = O-phospho-L-seryl-[protein] + ADP + H(+). The enzyme catalyses L-threonyl-[protein] + ATP = O-phospho-L-threonyl-[protein] + ADP + H(+). Required for proper chemotaxis and phagocytosis; proper spatiotemporal control of F-actin levels in chemotaxing cells. Negative regulator of the PI3K (phosphatidylinositol 3 kinase) pathway. Predominantly phosphorylates serines and threonines and tyrosines at a lower level. This chain is Dual specificity protein kinase shkB (shkB), found in Dictyostelium discoideum (Social amoeba).